A 114-amino-acid polypeptide reads, in one-letter code: Cell division protein FtsB (114 aa).

Topologically, residues 1–3 (MGK) are cytoplasmic. A helical transmembrane segment spans residues 4 to 21 (LTLLLVVLLGWLQYSLWV). Residues 22-114 (GKNGVHDYMR…ASYPSVTASH (93 aa)) are Periplasmic-facing. Residues 31–62 (RVKQDVATQQANNAKLKSRNDQLFAEIDDLNG) are a coiled coil.

The protein belongs to the FtsB family. As to quaternary structure, part of a complex composed of FtsB, FtsL and FtsQ.

It is found in the cell inner membrane. Essential cell division protein. May link together the upstream cell division proteins, which are predominantly cytoplasmic, with the downstream cell division proteins, which are predominantly periplasmic. The protein is Cell division protein FtsB of Edwardsiella ictaluri (strain 93-146).